Here is a 120-residue protein sequence, read N- to C-terminus: Chaperonin GroEL (120 aa).

Residue 23–27 (DGTTT) coordinates ATP.

The protein belongs to the chaperonin (HSP60) family. Forms a cylinder of 14 subunits composed of two heptameric rings stacked back-to-back. Interacts with the co-chaperonin GroES.

It localises to the cytoplasm. The enzyme catalyses ATP + H2O + a folded polypeptide = ADP + phosphate + an unfolded polypeptide.. In terms of biological role, together with its co-chaperonin GroES, plays an essential role in assisting protein folding. The GroEL-GroES system forms a nano-cage that allows encapsulation of the non-native substrate proteins and provides a physical environment optimized to promote and accelerate protein folding. The protein is Chaperonin GroEL of Mycolicibacterium chitae (Mycobacterium chitae).